The chain runs to 684 residues: Sorbicillinoid biosynthetic cluster transcription factor 2 (684 aa).

The segment at 114–151 (ISSAPSLETPPESVAASPPTVDSIPVSHHVNEDPEAEP) is disordered.

Its subcellular location is the nucleus. In terms of biological role, transcription factor that acts in concert with sorR1 which is a transcriptional activator of the gene cluster that mediates the biosynthesis of sorbicillinoids, a diverse group of yellow secondary metabolites that restrict growth of competing pathogenic fungi but not of bacteria. In Penicillium rubens (strain ATCC 28089 / DSM 1075 / NRRL 1951 / Wisconsin 54-1255) (Penicillium chrysogenum), this protein is Sorbicillinoid biosynthetic cluster transcription factor 2.